The chain runs to 443 residues: Proline--tRNA ligase (443 aa).

The protein belongs to the class-II aminoacyl-tRNA synthetase family. ProS type 2 subfamily. Homodimer.

Its subcellular location is the cytoplasm. It catalyses the reaction tRNA(Pro) + L-proline + ATP = L-prolyl-tRNA(Pro) + AMP + diphosphate. In terms of biological role, catalyzes the attachment of proline to tRNA(Pro) in a two-step reaction: proline is first activated by ATP to form Pro-AMP and then transferred to the acceptor end of tRNA(Pro). This is Proline--tRNA ligase from Methylobacterium nodulans (strain LMG 21967 / CNCM I-2342 / ORS 2060).